The following is a 1841-amino-acid chain: Sodium channel protein type 4 subunit alpha (1841 aa).

The Cytoplasmic portion of the chain corresponds to 1–131 (MASSSLPTLV…RVAIKVLIHA (131 aa)). The span at 32 to 60 (AMEEEARLQRNKQMEIEEPERKPRSDLEA) shows a compositional bias: basic and acidic residues. A disordered region spans residues 32–63 (AMEEEARLQRNKQMEIEEPERKPRSDLEAGKN). One copy of the I repeat lies at 113–448 (MLSPFSIVRR…VVAMAYAEQN (336 aa)). A helical membrane pass occupies residues 132 to 150 (LFSMFIMITILTNCVFMTM). Residues 151–157 (SNPPSWS) lie on the Extracellular side of the membrane. The chain crosses the membrane as a helical span at residues 158–178 (KDVEYTFTGIYTFESLIKMLA). Topologically, residues 179–192 (RGFCIDDFTFLRDP) are cytoplasmic. The chain crosses the membrane as a helical span at residues 193 to 210 (WNWLDFSVITMAYVTEFV). Over 211 to 216 (DLGNIS) the chain is Extracellular. N214 carries an N-linked (GlcNAc...) asparagine glycan. A helical transmembrane segment spans residues 217-233 (ALRTFRVLRALKTITVI). At 234–252 (PGLKTIVGALIQSVKKLSD) the chain is on the cytoplasmic side. Residues 253-272 (VMILTVFCLSVFALVGLQLF) form a helical membrane-spanning segment. At 273-385 (MGNLRQKCVR…PNYGYTSYDT (113 aa)) the chain is on the extracellular side. The cysteines at positions 280 and 354 are disulfide-linked. N288, N291, N297, N303, N315, N327, and N356 each carry an N-linked (GlcNAc...) asparagine glycan. Cysteines 363 and 369 form a disulfide. Residues 386–410 (FSWAFLALFRLMTQDYWENLFQLTL) constitute an intramembrane region (pore-forming). The Extracellular portion of the chain corresponds to 411–417 (RAAGKTY). The chain crosses the membrane as a helical span at residues 418 to 438 (MIFFVVIIFLGSFYLINLILA). Residues 439–572 (VVAMAYAEQN…HIILLIVMDP (134 aa)) lie on the Cytoplasmic side of the membrane. The segment at 484 to 522 (ALEGGEEADGDPTHSKDCNGSLDTSGEKGPPRPSCSAES) is disordered. The II repeat unit spans residues 554-826 (CCAPWVKFKH…QIAIGRIKWG (273 aa)). A helical membrane pass occupies residues 573-591 (FVDLGITICIVLNTLFMAM). The Extracellular segment spans residues 592–602 (EHYPMTEHFDN). The chain crosses the membrane as a helical span at residues 603-622 (VLSVGNLVFTGIFTAEMVLK). Residues 623–636 (LIAMDPYEYFQQGW) lie on the Cytoplasmic side of the membrane. The helical transmembrane segment at 637–656 (NIFDSFIVTLSLVELGLANV) threads the bilayer. At 657–658 (QG) the chain is on the extracellular side. A helical membrane pass occupies residues 659-676 (LSVLRSFRLLRVFKLAKS). Residues 677–692 (WPTLNMLIKIIGNSVG) lie on the Cytoplasmic side of the membrane. The chain crosses the membrane as a helical span at residues 693–711 (ALGNLTLVLAIIVFIFAVV). Residues 712-740 (GMQLFGKSYKECVCKIASDCSLPRWHMHD) lie on the Extracellular side of the membrane. A disulfide bond links C725 and C731. An intramembrane region (pore-forming) is located at residues 741-761 (FFHSFLIVFRILCGEWIETMW). The Extracellular portion of the chain corresponds to 762 to 772 (DCMEVAGQAMC). C763 and C772 form a disulfide bridge. A helical transmembrane segment spans residues 773–791 (LTVFLMVMVIGNLVVLNLF). Over 792–1026 (LALLLSSFSA…ACFKIVEHNW (235 aa)) the chain is Cytoplasmic. Disordered stretches follow at residues 854-896 (EPGG…LTDG) and 925-983 (SDLE…EGEL). Residues 867–887 (EDEKKEPPPEDGNKELKDNHI) are compositionally biased toward basic and acidic residues. Acidic residues-rich tracts occupy residues 925–941 (SDLE…FSEP) and 969–983 (EDPE…EGEL). The III repeat unit spans residues 1007–1320 (RGKMWWTLRR…KKYYNAMKKL (314 aa)). Residues 1027–1044 (FETFIVFMILLSSGALAF) form a helical membrane-spanning segment. Residues 1045 to 1057 (EDIYIEQRRVIRT) lie on the Extracellular side of the membrane. The chain crosses the membrane as a helical span at residues 1058–1076 (ILEYADKVFTYIFILEMLL). Over 1077–1090 (KWVAYGFKVYFTNA) the chain is Cytoplasmic. The helical transmembrane segment at 1091 to 1109 (WCWLDFLIVDVSIISLVAN) threads the bilayer. Residues 1110 to 1117 (WLGYSELG) lie on the Extracellular side of the membrane. The helical transmembrane segment at 1118–1136 (PIKSLRTLRALRPLRALSR) threads the bilayer. Residues 1137–1153 (FEGMRVVVNALLGAIPS) lie on the Cytoplasmic side of the membrane. A helical membrane pass occupies residues 1154–1173 (IMNVLLVCLIFWLIFSIMGV). Topologically, residues 1174-1224 (NLFAGKFYYCINTTTSERFDISVVNNKSECESLMYTGQVRWMNVKVNYDNV) are extracellular. Cysteines 1183 and 1203 form a disulfide. Residues N1185 and N1199 are each glycosylated (N-linked (GlcNAc...) asparagine). Positions 1225-1246 (GLGYLSLLQVATFKGWMDIMYA) form an intramembrane region, pore-forming. The Extracellular portion of the chain corresponds to 1247–1263 (AVDSREKEEQPDYEVNL). The chain crosses the membrane as a helical span at residues 1264-1285 (YMYLYFVIFIIFGSFFTLNLFI). The Cytoplasmic portion of the chain corresponds to 1286–1348 (GVIIDNFNQQ…MVYDFVTKQV (63 aa)). The important for rapid channel inactivation stretch occupies residues 1304–1306 (IFM). An IV repeat occupies 1329–1627 (IPRPQNKIQG…WEKFDPDATQ (299 aa)). Residues 1349–1366 (FDISIMILICLNMVTMMV) form a helical membrane-spanning segment. At 1367-1377 (ETDDQSQLKVD) the chain is on the extracellular side. Residues 1378–1396 (ILYNINMVFIIVFTGECVL) form a helical membrane-spanning segment. Over 1397–1408 (KMFALRHYYFTI) the chain is Cytoplasmic. Residues 1409–1426 (GWNIFDFVVVILSIVGLA) traverse the membrane as a helical segment. Topologically, residues 1427-1439 (LSDLIQKYFVSPT) are extracellular. The chain crosses the membrane as a helical span at residues 1440–1456 (LFRVIRLARIGRVLRLI). Residues 1457–1475 (RGAKGIRTLLFALMMSLPA) are Cytoplasmic-facing. The chain crosses the membrane as a helical span at residues 1476–1493 (LFNIGLLLFLVMFIYSIF). Residues 1494–1515 (GMSNFAYVKKESGIDDMFNFET) are Extracellular-facing. The pore-forming intramembrane region spans 1516 to 1538 (FGNSIICLFEITTSAGWDGLLNP). Topologically, residues 1539-1568 (ILNSGPPDCDPTLENPGTNIKGDCGNPSIG) are extracellular. C1547 and C1562 form a disulfide bridge. The helical transmembrane segment at 1569-1591 (ICFFCSYIIISFLIVVNMYIAII) threads the bilayer. Over 1592 to 1841 (LENFNVATEE…VRPGVKESLV (250 aa)) the chain is Cytoplasmic. An IQ domain is found at 1721–1750 (EEVCAIKIQRAYRRHLLQRSVKQASYMYRH). Over residues 1776 to 1794 (SEKEDNGVQSQGEKEKDST) the composition is skewed to basic and acidic residues. The tract at residues 1776 to 1841 (SEKEDNGVQS…VRPGVKESLV (66 aa)) is disordered. Positions 1801–1812 (TEVTAPSSSDTA) are enriched in polar residues. Positions 1814–1826 (TPPPPSPPPPSSP) are enriched in pro residues.

This sequence belongs to the sodium channel (TC 1.A.1.10) family. Nav1.4/SCN4A subfamily. In terms of assembly, the Nav1.4 voltage-gated sodium channel consists of an ion-conducting alpha subunit SCN4A which is functional on its own and a regulatory beta subunit SCN1B. SCN1B strongly enhances the presence of SCN4A at the cell surface. SCN1B is also required for rapid channel inactivation and recovery after inactivation. It prevents the decrease of channel activity in response to repetitive, high-frequency depolarizations. Interacts with the syntrophins SNTA1, SNTB1 and SNTB2 (via PDZ domain); probably links SCN4A to the actin cytoskeleton and the extracellular matrix via the dystrophin-associated protein complex and regulates its localization in muscle cells. Interacts with TMEM233; probable regulator of the channel. In terms of tissue distribution, detected in quadriceps muscle (at protein level). Detected in hind-limb skeletal muscles, but not in heart or brain. Detected at low levels in the myocardium. According to Pubme=26427606 detected also in brain.

The protein localises to the cell membrane. It carries out the reaction Na(+)(in) = Na(+)(out). With respect to regulation, the channel is inhibited by tetrodotoxin. Its function is as follows. Pore-forming subunit of Nav1.4, a voltage-gated sodium (Nav) channel that directly mediates the depolarizing phase of action potentials in excitable membranes. Navs, also called VGSCs (voltage-gated sodium channels) or VDSCs (voltage-dependent sodium channels), operate by switching between closed and open conformations depending on the voltage difference across the membrane. In the open conformation they allow Na(+) ions to selectively pass through the pore, along their electrochemical gradient. The influx of Na+ ions provokes membrane depolarization, initiating the propagation of electrical signals throughout cells and tissues. Highly expressed in skeletal muscles, Nav1.4 generates the action potential crucial for muscle contraction. The chain is Sodium channel protein type 4 subunit alpha from Mus musculus (Mouse).